Here is a 351-residue protein sequence, read N- to C-terminus: CCN family member 3 (351 aa).

Positions 1–24 (METGGGQGLPVLLLLLLLLRPCEV) are cleaved as a signal peptide. The 75-residue stretch at 27–101 (REAACPRPCG…GGGAGICMVL (75 aa)) folds into the IGFBP N-terminal domain. 6 disulfides stabilise this stretch: cysteine 31-cysteine 57, cysteine 35-cysteine 59, cysteine 39-cysteine 60, cysteine 46-cysteine 63, cysteine 71-cysteine 85, and cysteine 77-cysteine 98. The VWFC domain maps to 104–170 (DNCVFDGMIY…GECCEKWVCD (67 aa)). The TSP type-1 domain maps to 201–246 (NCIEQTTEWSACSKSCGMGFSTRVTNRNQQCEMVKQTRLCMMRPCE). 5 cysteine pairs are disulfide-bonded: cysteine 258/cysteine 295, cysteine 275/cysteine 309, cysteine 286/cysteine 325, cysteine 289/cysteine 327, and cysteine 294/cysteine 331. The CTCK domain maps to 258–332 (CIQTKKSMKA…NTCVCHGNCP (75 aa)). Asparagine 274 carries N-linked (GlcNAc...) asparagine glycosylation.

This sequence belongs to the CCN family. As to expression, brain and heart, and at a lower level in muscle and intestine, in the embryo. Lung and less so in brain and spleen, in adult chicken.

Its subcellular location is the secreted. It is found in the cytoplasm. It localises to the cell junction. The protein localises to the gap junction. Its function is as follows. Immediate-early protein likely to play a role in cell growth regulation. Its overexpression is associated with tumorigenesis and expression of a N-terminal-truncated version of CCN3 gene in chicken embryonic fibroblasts (CEF) is sufficient to induce the transformation of CEF in vitro. This chain is CCN family member 3 (CCN3), found in Gallus gallus (Chicken).